Consider the following 314-residue polypeptide: 4-hydroxy-3-methylbut-2-enyl diphosphate reductase (314 aa).

C12 contacts [4Fe-4S] cluster. H41 and H74 together coordinate (2E)-4-hydroxy-3-methylbut-2-enyl diphosphate. Dimethylallyl diphosphate is bound by residues H41 and H74. Residues H41 and H74 each contribute to the isopentenyl diphosphate site. [4Fe-4S] cluster is bound at residue C96. Residue H124 participates in (2E)-4-hydroxy-3-methylbut-2-enyl diphosphate binding. Residue H124 participates in dimethylallyl diphosphate binding. H124 is an isopentenyl diphosphate binding site. E126 serves as the catalytic Proton donor. Residue T168 participates in (2E)-4-hydroxy-3-methylbut-2-enyl diphosphate binding. A [4Fe-4S] cluster-binding site is contributed by C198. Residues S226, S227, N228, and S270 each contribute to the (2E)-4-hydroxy-3-methylbut-2-enyl diphosphate site. Residues S226, S227, N228, and S270 each contribute to the dimethylallyl diphosphate site. Isopentenyl diphosphate contacts are provided by S226, S227, N228, and S270.

The protein belongs to the IspH family. The cofactor is [4Fe-4S] cluster.

It carries out the reaction isopentenyl diphosphate + 2 oxidized [2Fe-2S]-[ferredoxin] + H2O = (2E)-4-hydroxy-3-methylbut-2-enyl diphosphate + 2 reduced [2Fe-2S]-[ferredoxin] + 2 H(+). The catalysed reaction is dimethylallyl diphosphate + 2 oxidized [2Fe-2S]-[ferredoxin] + H2O = (2E)-4-hydroxy-3-methylbut-2-enyl diphosphate + 2 reduced [2Fe-2S]-[ferredoxin] + 2 H(+). It functions in the pathway isoprenoid biosynthesis; dimethylallyl diphosphate biosynthesis; dimethylallyl diphosphate from (2E)-4-hydroxy-3-methylbutenyl diphosphate: step 1/1. The protein operates within isoprenoid biosynthesis; isopentenyl diphosphate biosynthesis via DXP pathway; isopentenyl diphosphate from 1-deoxy-D-xylulose 5-phosphate: step 6/6. In terms of biological role, catalyzes the conversion of 1-hydroxy-2-methyl-2-(E)-butenyl 4-diphosphate (HMBPP) into a mixture of isopentenyl diphosphate (IPP) and dimethylallyl diphosphate (DMAPP). Acts in the terminal step of the DOXP/MEP pathway for isoprenoid precursor biosynthesis. In Pseudomonas aeruginosa (strain LESB58), this protein is 4-hydroxy-3-methylbut-2-enyl diphosphate reductase.